Here is a 388-residue protein sequence, read N- to C-terminus: Chorismate synthase (388 aa).

Positions 39 and 45 each coordinate NADP(+). FMN contacts are provided by residues 130–132 (RSS), 251–252 (NA), Gly296, 311–315 (KPIPT), and Arg337.

Belongs to the chorismate synthase family. As to quaternary structure, homotetramer. The cofactor is FMNH2.

It carries out the reaction 5-O-(1-carboxyvinyl)-3-phosphoshikimate = chorismate + phosphate. It functions in the pathway metabolic intermediate biosynthesis; chorismate biosynthesis; chorismate from D-erythrose 4-phosphate and phosphoenolpyruvate: step 7/7. Its function is as follows. Catalyzes the anti-1,4-elimination of the C-3 phosphate and the C-6 proR hydrogen from 5-enolpyruvylshikimate-3-phosphate (EPSP) to yield chorismate, which is the branch point compound that serves as the starting substrate for the three terminal pathways of aromatic amino acid biosynthesis. This reaction introduces a second double bond into the aromatic ring system. The protein is Chorismate synthase of Streptococcus pneumoniae (strain 70585).